Consider the following 380-residue polypeptide: 1-deoxy-D-xylulose 5-phosphate reductoisomerase 2 (380 aa).

NADPH is bound by residues Ser-10, Gly-11, Ser-12, Ile-13, Gly-36, Lys-37, Asn-38, and Asn-120. Residue Lys-121 participates in 1-deoxy-D-xylulose 5-phosphate binding. Glu-122 contacts NADPH. A Mn(2+)-binding site is contributed by Asp-146. The 1-deoxy-D-xylulose 5-phosphate site is built by Ser-147, Glu-148, Ser-172, and His-195. Glu-148 contacts Mn(2+). Residue Gly-201 participates in NADPH binding. 1-deoxy-D-xylulose 5-phosphate is bound by residues Ser-208, Asn-213, Lys-214, and Glu-217. Glu-217 serves as a coordination point for Mn(2+).

The protein belongs to the DXR family. Requires Mg(2+) as cofactor. Mn(2+) is required as a cofactor.

The catalysed reaction is 2-C-methyl-D-erythritol 4-phosphate + NADP(+) = 1-deoxy-D-xylulose 5-phosphate + NADPH + H(+). Its pathway is isoprenoid biosynthesis; isopentenyl diphosphate biosynthesis via DXP pathway; isopentenyl diphosphate from 1-deoxy-D-xylulose 5-phosphate: step 1/6. Catalyzes the NADPH-dependent rearrangement and reduction of 1-deoxy-D-xylulose-5-phosphate (DXP) to 2-C-methyl-D-erythritol 4-phosphate (MEP). In Bacillus anthracis, this protein is 1-deoxy-D-xylulose 5-phosphate reductoisomerase 2.